We begin with the raw amino-acid sequence, 334 residues long: Methylthioribose-1-phosphate isomerase (334 aa).

Residues Arg-44 to Ala-46, Arg-87, and Gln-192 contribute to the substrate site. The active-site Proton donor is Asp-233. Asn-243–Lys-244 is a binding site for substrate.

It belongs to the eIF-2B alpha/beta/delta subunits family. MtnA subfamily.

It catalyses the reaction 5-(methylsulfanyl)-alpha-D-ribose 1-phosphate = 5-(methylsulfanyl)-D-ribulose 1-phosphate. The protein operates within amino-acid biosynthesis; L-methionine biosynthesis via salvage pathway; L-methionine from S-methyl-5-thio-alpha-D-ribose 1-phosphate: step 1/6. Catalyzes the interconversion of methylthioribose-1-phosphate (MTR-1-P) into methylthioribulose-1-phosphate (MTRu-1-P). This chain is Methylthioribose-1-phosphate isomerase, found in Dehalococcoides mccartyi (strain ATCC BAA-2266 / KCTC 15142 / 195) (Dehalococcoides ethenogenes (strain 195)).